A 104-amino-acid chain; its full sequence is 11 kDa late embryogenesis abundant protein (104 aa).

The span at 1 to 24 shows a compositional bias: low complexity; that stretch reads MQSGKNAAASAKETAANVAASAKA. A disordered region spans residues 1–104; that stretch reads MQSGKNAAAS…TGHRTGTGGI (104 aa). Over residues 25–74 the composition is skewed to basic and acidic residues; it reads GMEKTKASLQEKGEKMTAHDPMQKEMAREKKEERKHEAEYEKQAAKEHNA. A compositionally biased stretch (polar residues) spans 75-89; sequence AQKQTTGIGTGTHSY.

This sequence belongs to the LEA type 1 family. As to expression, maximally expressed in dry seeds. Also present in mid-maturation embryos.

Functionally, LEA proteins are late embryonic proteins abundant in higher plant seed embryos. They may play an essential role in seed survival and in controlling water exchanges during seed desiccation and imbibition. The polypeptide is 11 kDa late embryogenesis abundant protein (Helianthus annuus (Common sunflower)).